Consider the following 106-residue polypeptide: UPF0145 protein Athe_0545 (106 aa).

It belongs to the UPF0145 family.

The sequence is that of UPF0145 protein Athe_0545 from Caldicellulosiruptor bescii (strain ATCC BAA-1888 / DSM 6725 / KCTC 15123 / Z-1320) (Anaerocellum thermophilum).